The following is a 273-amino-acid chain: Shikimate dehydrogenase (NADP(+)) (273 aa).

Shikimate contacts are provided by residues 14–16 (SKS) and threonine 61. Lysine 65 serves as the catalytic Proton acceptor. Shikimate-binding residues include asparagine 86 and aspartate 102. Residues 126–130 (GAGGA), 150–155 (NRTHAK), and methionine 213 each bind NADP(+). Tyrosine 215 lines the shikimate pocket. An NADP(+)-binding site is contributed by glycine 237.

Belongs to the shikimate dehydrogenase family. In terms of assembly, homodimer.

The catalysed reaction is shikimate + NADP(+) = 3-dehydroshikimate + NADPH + H(+). The protein operates within metabolic intermediate biosynthesis; chorismate biosynthesis; chorismate from D-erythrose 4-phosphate and phosphoenolpyruvate: step 4/7. Functionally, involved in the biosynthesis of the chorismate, which leads to the biosynthesis of aromatic amino acids. Catalyzes the reversible NADPH linked reduction of 3-dehydroshikimate (DHSA) to yield shikimate (SA). The protein is Shikimate dehydrogenase (NADP(+)) of Aeromonas salmonicida (strain A449).